Here is a 614-residue protein sequence, read N- to C-terminus: UvrABC system protein C (614 aa).

The GIY-YIG domain occupies N26–V104. Positions S215–V250 constitute a UVR domain.

Belongs to the UvrC family. In terms of assembly, interacts with UvrB in an incision complex.

It is found in the cytoplasm. Functionally, the UvrABC repair system catalyzes the recognition and processing of DNA lesions. UvrC both incises the 5' and 3' sides of the lesion. The N-terminal half is responsible for the 3' incision and the C-terminal half is responsible for the 5' incision. This Psychrobacter arcticus (strain DSM 17307 / VKM B-2377 / 273-4) protein is UvrABC system protein C.